Consider the following 257-residue polypeptide: Global transcriptional regulator CodY (257 aa).

The GAF domain stretch occupies residues 1-155 (MSLLSKTREL…AATVIGMEIL (155 aa)). Residues 203–222 (ASKVADRVGITRSVIVNALR) constitute a DNA-binding region (H-T-H motif).

Belongs to the CodY family.

It is found in the cytoplasm. Its function is as follows. DNA-binding global transcriptional regulator which is involved in the adaptive response to starvation and acts by directly or indirectly controlling the expression of numerous genes in response to nutrient availability. During rapid exponential growth, CodY is highly active and represses genes whose products allow adaptation to nutrient depletion. The chain is Global transcriptional regulator CodY from Staphylococcus epidermidis (strain ATCC 12228 / FDA PCI 1200).